The primary structure comprises 499 residues: Sensor histidine kinase PdtaS (499 aa).

The tract at residues 4–149 is GAF; sequence LGDLLAEHTM…PLEGAYLDCA (146 aa). Positions 178–289 are PAS-like; the sequence is DGFIRLNEGG…TEVKRRDRAL (112 aa). One can recognise a Histidine kinase domain in the interval 298–493; that stretch reads EIHHRVKNNL…DVVLRVPIGR (196 aa). His301 is subject to Phosphohistidine; by autocatalysis.

Autophosphorylated.

It localises to the cytoplasm. It carries out the reaction ATP + protein L-histidine = ADP + protein N-phospho-L-histidine.. Functionally, member of the two-component regulatory system PdtaR/PdtaS. This two-component system plays an essential role in mycobacterial adaptation to poor nutrient conditions. Nutrient deprivation results in increasing intracellular concentrations of cyclic diguanosine monophosphate (c-di-GMP), which binds to the PdtaS sensor and promotes its autophosphorylation, leading to the activation of the signaling cascade. The phosphate group is then transferred to PdtaR. The sequence is that of Sensor histidine kinase PdtaS from Mycolicibacterium smegmatis (strain ATCC 700084 / mc(2)155) (Mycobacterium smegmatis).